Consider the following 122-residue polypeptide: S-adenosylmethionine decarboxylase proenzyme (122 aa).

The active-site Schiff-base intermediate with substrate; via pyruvic acid is the S69. The residue at position 69 (S69) is a Pyruvic acid (Ser); by autocatalysis. H74 functions as the Proton acceptor; for processing activity in the catalytic mechanism. The Proton donor; for catalytic activity role is filled by C89.

Belongs to the prokaryotic AdoMetDC family. Type 1 subfamily. Heterotetramer of two alpha and two beta chains arranged as a dimer of alpha/beta heterodimers. Requires pyruvate as cofactor. In terms of processing, is synthesized initially as an inactive proenzyme. Formation of the active enzyme involves a self-maturation process in which the active site pyruvoyl group is generated from an internal serine residue via an autocatalytic post-translational modification. Two non-identical subunits are generated from the proenzyme in this reaction, and the pyruvate is formed at the N-terminus of the alpha chain, which is derived from the carboxyl end of the proenzyme. The post-translation cleavage follows an unusual pathway, termed non-hydrolytic serinolysis, in which the side chain hydroxyl group of the serine supplies its oxygen atom to form the C-terminus of the beta chain, while the remainder of the serine residue undergoes an oxidative deamination to produce ammonia and the pyruvoyl group blocking the N-terminus of the alpha chain.

The catalysed reaction is S-adenosyl-L-methionine + H(+) = S-adenosyl 3-(methylsulfanyl)propylamine + CO2. It functions in the pathway amine and polyamine biosynthesis; S-adenosylmethioninamine biosynthesis; S-adenosylmethioninamine from S-adenosyl-L-methionine: step 1/1. Catalyzes the decarboxylation of S-adenosylmethionine to S-adenosylmethioninamine (dcAdoMet), the propylamine donor required for the synthesis of the polyamines spermine and spermidine from the diamine putrescine. The polypeptide is S-adenosylmethionine decarboxylase proenzyme (Saccharolobus islandicus (strain L.S.2.15 / Lassen #1) (Sulfolobus islandicus)).